The following is a 196-amino-acid chain: ATP-dependent Clp protease proteolytic subunit (196 aa).

S98 (nucleophile) is an active-site residue. H123 is an active-site residue.

The protein belongs to the peptidase S14 family. Fourteen ClpP subunits assemble into 2 heptameric rings which stack back to back to give a disk-like structure with a central cavity, resembling the structure of eukaryotic proteasomes.

The protein localises to the cytoplasm. It carries out the reaction Hydrolysis of proteins to small peptides in the presence of ATP and magnesium. alpha-casein is the usual test substrate. In the absence of ATP, only oligopeptides shorter than five residues are hydrolyzed (such as succinyl-Leu-Tyr-|-NHMec, and Leu-Tyr-Leu-|-Tyr-Trp, in which cleavage of the -Tyr-|-Leu- and -Tyr-|-Trp bonds also occurs).. Cleaves peptides in various proteins in a process that requires ATP hydrolysis. Has a chymotrypsin-like activity. Plays a major role in the degradation of misfolded proteins. The sequence is that of ATP-dependent Clp protease proteolytic subunit from Sulfurimonas denitrificans (strain ATCC 33889 / DSM 1251) (Thiomicrospira denitrificans (strain ATCC 33889 / DSM 1251)).